The following is a 477-amino-acid chain: Bifunctional protein HldE (477 aa).

The segment at Met-1–Thr-320 is ribokinase. Asn-195–Glu-198 lines the ATP pocket. Residue Asp-264 is part of the active site. The segment at Met-346–Gln-477 is cytidylyltransferase.

In the N-terminal section; belongs to the carbohydrate kinase PfkB family. It in the C-terminal section; belongs to the cytidylyltransferase family. As to quaternary structure, homodimer.

It catalyses the reaction D-glycero-beta-D-manno-heptose 7-phosphate + ATP = D-glycero-beta-D-manno-heptose 1,7-bisphosphate + ADP + H(+). The catalysed reaction is D-glycero-beta-D-manno-heptose 1-phosphate + ATP + H(+) = ADP-D-glycero-beta-D-manno-heptose + diphosphate. Its pathway is nucleotide-sugar biosynthesis; ADP-L-glycero-beta-D-manno-heptose biosynthesis; ADP-L-glycero-beta-D-manno-heptose from D-glycero-beta-D-manno-heptose 7-phosphate: step 1/4. The protein operates within nucleotide-sugar biosynthesis; ADP-L-glycero-beta-D-manno-heptose biosynthesis; ADP-L-glycero-beta-D-manno-heptose from D-glycero-beta-D-manno-heptose 7-phosphate: step 3/4. Its function is as follows. Catalyzes the phosphorylation of D-glycero-D-manno-heptose 7-phosphate at the C-1 position to selectively form D-glycero-beta-D-manno-heptose-1,7-bisphosphate. Functionally, catalyzes the ADP transfer from ATP to D-glycero-beta-D-manno-heptose 1-phosphate, yielding ADP-D-glycero-beta-D-manno-heptose. The protein is Bifunctional protein HldE of Shewanella piezotolerans (strain WP3 / JCM 13877).